The primary structure comprises 142 residues: Hemoglobin subunit alpha (142 aa).

A Globin domain is found at 2 to 142 (VLSATDKSNV…VSTVLTSKYR (141 aa)). Serine 4 is modified (phosphoserine). 2 positions are modified to N6-succinyllysine: lysine 8 and lysine 12. An N6-acetyllysine; alternate modification is found at lysine 17. Lysine 17 bears the N6-succinyllysine; alternate mark. Position 25 is a phosphotyrosine (tyrosine 25). Serine 36 bears the Phosphoserine mark. At lysine 41 the chain carries N6-succinyllysine. Phosphoserine is present on serine 50. Residue histidine 59 participates in O2 binding. Residue histidine 88 participates in heme b binding. Serine 103 carries the post-translational modification Phosphoserine. Threonine 109 carries the post-translational modification Phosphothreonine. Position 125 is a phosphoserine (serine 125). Phosphothreonine is present on residues threonine 135 and threonine 138. At serine 139 the chain carries Phosphoserine.

Belongs to the globin family. In terms of assembly, heterotetramer of two alpha chains and two beta chains. As to expression, red blood cells.

Functionally, involved in oxygen transport from the lung to the various peripheral tissues. In terms of biological role, hemopressin acts as an antagonist peptide of the cannabinoid receptor CNR1. Hemopressin-binding efficiently blocks cannabinoid receptor CNR1 and subsequent signaling. This Alces alces alces (European moose) protein is Hemoglobin subunit alpha (HBA).